Reading from the N-terminus, the 207-residue chain is Claudin-11 (207 aa).

Met-1 is a topological domain (cytoplasmic). A helical transmembrane segment spans residues 2-22 (VATCLQVVGFVTSFVGWIGII). At 23-82 (VTTSTNDWVVTCSYTIPTCRKMDELGSKGLWADCVMATGLYHCKPLVDILILPGYVQACR) the chain is on the extracellular side. A helical transmembrane segment spans residues 83–103 (ALMIAASVLGLPAILLLLTVL). At 104–122 (PCIRMGHEPGVAKYRRAQL) the chain is on the cytoplasmic side. Residues 123-143 (AGVLLILLALCAIVATIWFPV) traverse the membrane as a helical segment. Topologically, residues 144–157 (CAHREITIVSFGYS) are extracellular. A helical transmembrane segment spans residues 158-178 (LYAGWIGAVMCLVGGCVIVCC). At 179-207 (SGDAQSFGENRFYYSSGSSSPTHAKSAHV) the chain is on the cytoplasmic side. Phosphoserine is present on residues Ser-193, Ser-194, Ser-197, and Ser-198.

This sequence belongs to the claudin family. As to quaternary structure, interacts with tetraspanin-3/TSPAN3. Interacts with OCLN.

It is found in the cell junction. The protein localises to the tight junction. Its subcellular location is the cell membrane. Functionally, plays a major role in tight junction-specific obliteration of the intercellular space, through calcium-independent cell-adhesion activity. The polypeptide is Claudin-11 (Cldn11) (Mus musculus (Mouse)).